Reading from the N-terminus, the 188-residue chain is Elongation factor P (188 aa).

It belongs to the elongation factor P family.

The protein localises to the cytoplasm. The protein operates within protein biosynthesis; polypeptide chain elongation. Functionally, involved in peptide bond synthesis. Stimulates efficient translation and peptide-bond synthesis on native or reconstituted 70S ribosomes in vitro. Probably functions indirectly by altering the affinity of the ribosome for aminoacyl-tRNA, thus increasing their reactivity as acceptors for peptidyl transferase. This is Elongation factor P from Azotobacter vinelandii (strain DJ / ATCC BAA-1303).